The following is a 112-amino-acid chain: uncharacterized protein (112 aa).

The N-terminal stretch at 1–25 (MKGTKLAVVVGMTVAAVSLAAPAQA) is a signal peptide.

This is an uncharacterized protein from Mycobacterium tuberculosis (strain CDC 1551 / Oshkosh).